The following is a 470-amino-acid chain: Ribulose bisphosphate carboxylase large chain (470 aa).

Substrate is bound by residues asparagine 115 and threonine 165. Lysine 167 acts as the Proton acceptor in catalysis. A substrate-binding site is contributed by lysine 169. Mg(2+) contacts are provided by lysine 193, aspartate 195, and glutamate 196. N6-carboxylysine is present on lysine 193. Histidine 286 functions as the Proton acceptor in the catalytic mechanism. Residues arginine 287, histidine 319, and serine 371 each coordinate substrate.

It belongs to the RuBisCO large chain family. Type I subfamily. Heterohexadecamer of 8 large chains and 8 small chains. Mg(2+) is required as a cofactor.

Its subcellular location is the carboxysome. The catalysed reaction is 2 (2R)-3-phosphoglycerate + 2 H(+) = D-ribulose 1,5-bisphosphate + CO2 + H2O. It catalyses the reaction D-ribulose 1,5-bisphosphate + O2 = 2-phosphoglycolate + (2R)-3-phosphoglycerate + 2 H(+). Functionally, ruBisCO catalyzes two reactions: the carboxylation of D-ribulose 1,5-bisphosphate, the primary event in carbon dioxide fixation, as well as the oxidative fragmentation of the pentose substrate in the photorespiration process. Both reactions occur simultaneously and in competition at the same active site. The protein is Ribulose bisphosphate carboxylase large chain of Synechococcus sp. (strain CC9311).